A 604-amino-acid polypeptide reads, in one-letter code: Putative JmjC domain-containing protein L887 (604 aa).

One can recognise a JmjC domain in the interval 1 to 127 (MNNMKKIIII…PNNKLNLIQP (127 aa)). Residues 4-24 (MKKIIIISIIIIIIIVLLFYI) traverse the membrane as a helical segment.

The protein localises to the membrane. This Acanthamoeba polyphaga (Amoeba) protein is Putative JmjC domain-containing protein L887.